The chain runs to 235 residues: Small ribosomal subunit protein uS3 (235 aa).

Residues 39–107 form the KH type-2 domain; it reads VRLFLRKELF…PTQINIAEIR (69 aa).

The protein belongs to the universal ribosomal protein uS3 family. As to quaternary structure, part of the 30S ribosomal subunit. Forms a tight complex with proteins S10 and S14.

In terms of biological role, binds the lower part of the 30S subunit head. Binds mRNA in the 70S ribosome, positioning it for translation. The chain is Small ribosomal subunit protein uS3 from Buchnera aphidicola subsp. Baizongia pistaciae (strain Bp).